The sequence spans 554 residues: Aspartyl/glutamyl-tRNA(Asn/Gln) amidotransferase subunit B (554 aa).

Positions 491–554 are disordered; it reads AEQPTAPPPE…TPVSHQDAHA (64 aa). Over residues 502-540 the composition is skewed to low complexity; it reads ESAAETPEAPPAVEDAPPEAPTEAITAEAGSAEAITAAS.

The protein belongs to the GatB/GatE family. GatB subfamily. As to quaternary structure, heterotrimer of A, B and C subunits.

The enzyme catalyses L-glutamyl-tRNA(Gln) + L-glutamine + ATP + H2O = L-glutaminyl-tRNA(Gln) + L-glutamate + ADP + phosphate + H(+). It catalyses the reaction L-aspartyl-tRNA(Asn) + L-glutamine + ATP + H2O = L-asparaginyl-tRNA(Asn) + L-glutamate + ADP + phosphate + 2 H(+). Functionally, allows the formation of correctly charged Asn-tRNA(Asn) or Gln-tRNA(Gln) through the transamidation of misacylated Asp-tRNA(Asn) or Glu-tRNA(Gln) in organisms which lack either or both of asparaginyl-tRNA or glutaminyl-tRNA synthetases. The reaction takes place in the presence of glutamine and ATP through an activated phospho-Asp-tRNA(Asn) or phospho-Glu-tRNA(Gln). The polypeptide is Aspartyl/glutamyl-tRNA(Asn/Gln) amidotransferase subunit B (Gloeobacter violaceus (strain ATCC 29082 / PCC 7421)).